The chain runs to 499 residues: Phenylalanine--tRNA ligase alpha subunit (499 aa).

Residues T342, 381-383, and F422 each bind L-phenylalanine; that span reads QID. E424 is a binding site for Mg(2+). Position 447 (F447) interacts with L-phenylalanine.

This sequence belongs to the class-II aminoacyl-tRNA synthetase family. Phe-tRNA synthetase alpha subunit type 2 subfamily. In terms of assembly, tetramer of two alpha and two beta subunits. It depends on Mg(2+) as a cofactor.

The protein resides in the cytoplasm. It carries out the reaction tRNA(Phe) + L-phenylalanine + ATP = L-phenylalanyl-tRNA(Phe) + AMP + diphosphate + H(+). In Pyrococcus furiosus (strain ATCC 43587 / DSM 3638 / JCM 8422 / Vc1), this protein is Phenylalanine--tRNA ligase alpha subunit.